The sequence spans 400 residues: S-adenosylmethionine synthase (400 aa).

Histidine 17 lines the ATP pocket. Aspartate 19 contacts Mg(2+). Residue glutamate 45 participates in K(+) binding. Residues glutamate 58 and glutamine 101 each coordinate L-methionine. The flexible loop stretch occupies residues 101 to 111 (QSADIAMGVDQ). ATP is bound by residues 177–179 (DGK), 244–245 (RF), aspartate 253, 259–260 (RK), alanine 276, and lysine 280. Aspartate 253 lines the L-methionine pocket. Residue lysine 284 coordinates L-methionine.

This sequence belongs to the AdoMet synthase family. Homotetramer; dimer of dimers. The cofactor is Mg(2+). K(+) serves as cofactor.

The protein resides in the cytoplasm. It catalyses the reaction L-methionine + ATP + H2O = S-adenosyl-L-methionine + phosphate + diphosphate. It participates in amino-acid biosynthesis; S-adenosyl-L-methionine biosynthesis; S-adenosyl-L-methionine from L-methionine: step 1/1. In terms of biological role, catalyzes the formation of S-adenosylmethionine (AdoMet) from methionine and ATP. The overall synthetic reaction is composed of two sequential steps, AdoMet formation and the subsequent tripolyphosphate hydrolysis which occurs prior to release of AdoMet from the enzyme. The chain is S-adenosylmethionine synthase from Bacillus subtilis (strain 168).